The chain runs to 665 residues: MRGCLQLARWLSAAPTRPAASHWPGLCAAPRFFSHSAILRASARTARAAASKPPSDLESRIAAIPIERYRNFCIVAHVDHGKSTLSDRLLELTGTIEPGTNKQVLDKLDVERERGITVKAQTCTMIYNHNGEDYLLHLVDTPGHVDFRAEVSRSYASCGGALLLVDASQGVQAQTVANFYLAFAQGLELIPVINKVDLPSAEPERALEQMKQSFELDTENAVMVSAKSGLNVEKLLPTVVDKIPAPIGDCKKPLRMLLVDSWYDSYKGVICLVRVFDGEIRAGDQLVSFATGIKYYVGEVGIMYPNETPQTVIRAGQVGYIFFNPGMKRSKEAKIGDTYTKVGSEKAVEPLPGFEEPKAMVFVAAYPVDADHFEHLEDSINQLMLNDRSITVQKESSEALGAGFRLGFLGTLHCSVFEDRLRQEHGASIIITPPSVPVKVLWKDGREEIVTSPAKFPDEDELRSKVAEIKEPYVLATLTFPDEYLGKVIELCESNRGVQQSLEYFTSTQVILKYELPMAQLVDDFFGKLKGSTKGYASLDYEESAWQTSNIVKLQLLVNKAPVDAVARIVHYSQIERLGRKWVTKFKEHVDRQLFEVVIQAAVGRKVIARETVKPYRKDVLAKLHASDVSRRRKLLEKQKEGRKRLRAVGNVVIEHKAFQAFLSK.

Residues 1–40 (MRGCLQLARWLSAAPTRPAASHWPGLCAAPRFFSHSAILR) constitute a mitochondrion transit peptide. The tr-type G domain occupies 67 to 247 (ERYRNFCIVA…TVVDKIPAPI (181 aa)). Residues 76 to 83 (AHVDHGKS), 140 to 144 (DTPGH), and 194 to 197 (NKVD) each bind GTP.

The protein belongs to the TRAFAC class translation factor GTPase superfamily. Classic translation factor GTPase family. LepA subfamily.

It is found in the mitochondrion inner membrane. The catalysed reaction is GTP + H2O = GDP + phosphate + H(+). In terms of biological role, promotes mitochondrial protein synthesis. May act as a fidelity factor of the translation reaction, by catalyzing a one-codon backward translocation of tRNAs on improperly translocated ribosomes. Binds to mitochondrial ribosomes in a GTP-dependent manner. This Aspergillus terreus (strain NIH 2624 / FGSC A1156) protein is Translation factor guf1, mitochondrial (guf1).